We begin with the raw amino-acid sequence, 150 residues long: Macrodomain Ter protein (150 aa).

It belongs to the MatP family. Homodimer.

The protein localises to the cytoplasm. In terms of biological role, required for spatial organization of the terminus region of the chromosome (Ter macrodomain) during the cell cycle. Prevents early segregation of duplicated Ter macrodomains during cell division. Binds specifically to matS, which is a 13 bp signature motif repeated within the Ter macrodomain. The sequence is that of Macrodomain Ter protein from Escherichia coli (strain SMS-3-5 / SECEC).